The chain runs to 64 residues: MPKQKTNRAAAKRFKVTAKGKIKSANAFTSHRFHGKTKKQRRQLRGTAIIEKPMVKTYHKLLQK.

Belongs to the bacterial ribosomal protein bL35 family.

This is Large ribosomal subunit protein bL35 from Lactiplantibacillus plantarum (strain ATCC BAA-793 / NCIMB 8826 / WCFS1) (Lactobacillus plantarum).